The primary structure comprises 622 residues: Palmitoyl-protein thioesterase-dolichyl pyrophosphate phosphatase fusion 1 (622 aa).

A signal peptide spans 1-24; sequence MLSCSSFLIFFLFSWVLLPMKSFA. The Lumenal segment spans residues 25–405; it reads IPIISLDKVR…NVSEEKGPKS (381 aa). Cys-106 and Cys-138 form a disulfide bridge. Ser-125 is an active-site residue. Asn-223 is a glycosylation site (N-linked (GlcNAc...) asparagine). Residue Asp-245 is part of the active site. The N-linked (GlcNAc...) asparagine glycan is linked to Asn-260. The active site involves His-298. An N-linked (GlcNAc...) asparagine glycan is attached at Asn-396. The helical transmembrane segment at 406-426 threads the bilayer; sequence FANLAFITIFSHFFYHIDDMW. Residues 427–428 lie on the Cytoplasmic side of the membrane; that stretch reads RS. Residues 429 to 449 traverse the membrane as a helical segment; sequence TLGLFSLIPQIIGIIYLTVMF. Over 450-488 the chain is Lumenal; it reads TGRELDTFMQFGGQVVNEFINYVVKVSLKYPRPADIEYG. Residues 489 to 511 traverse the membrane as a helical segment; the sequence is VGYGMPSSHSQFMGFFSAYMIAW. At 512–519 the chain is on the cytoplasmic side; that stretch reads DYKYRRSQ. The helical transmembrane segment at 520–540 threads the bilayer; sequence CFSMLSFAKYAIYLTLSTFVC. Residues 541 to 552 are Lumenal-facing; that stretch reads SSRYLLDFHYLT. Residues 553-573 traverse the membrane as a helical segment; that stretch reads QVVYGYMIGFGVGLFWVYLVG. The Cytoplasmic portion of the chain corresponds to 574-622; sequence KLRSLGVTKWLLSLPPLQFFYIKDTIPHSKDNHKRQWLESKQFKNQKSN.

The protein in the N-terminal section; belongs to the palmitoyl-protein thioesterase family. This sequence in the C-terminal section; belongs to the dolichyldiphosphatase family. Post-translationally, proteolytically cleaved, possibly by krp1.

The protein resides in the vacuole. It localises to the endoplasmic reticulum membrane. The enzyme catalyses S-hexadecanoyl-L-cysteinyl-[protein] + H2O = L-cysteinyl-[protein] + hexadecanoate + H(+). It carries out the reaction a di-trans,poly-cis-dolichyl diphosphate + H2O = a di-trans,poly-cis-dolichyl phosphate + phosphate + H(+). Its function is as follows. Essential protein. Removes thioester-linked fatty acyl groups such as palmitate from modified cysteine residues in proteins or peptides during vacuolar degradation. Required for efficient N-glycosylation. Necessary for maintaining optimal levels of dolichol-linked oligosaccharides. The chain is Palmitoyl-protein thioesterase-dolichyl pyrophosphate phosphatase fusion 1 (pdf1) from Schizosaccharomyces pombe (strain 972 / ATCC 24843) (Fission yeast).